Consider the following 267-residue polypeptide: Potassium channel regulatory protein (267 aa).

The region spanning 5–74 (ELVTLNVGGK…LRTQQLLLPT (70 aa)) is the BTB domain.

Can form homooligomers. Interacts with KCNA1 (via cytoplasmic N-terminal domain) and KCNA4.

The protein localises to the endoplasmic reticulum. In terms of biological role, inhibits potassium fluxes in cells. May regulate Kv1 family channel proteins by retaining a fraction of channels in endomembranes. This Bos taurus (Bovine) protein is Potassium channel regulatory protein (KCNRG).